The sequence spans 76 residues: Paralithocin 3 (76 aa).

The signal sequence occupies residues 1-23 (MGPMKVLLVMLVVMVAAPHIADA). Cystine bridges form between Cys31/Cys62, Cys40/Cys58, Cys44/Cys56, and Cys49/Cys59. A Proline amide; partial modification is found at Pro74.

It belongs to the paralithocin family. The amidated form is probably the active form.

Has antibacterial activity, mainly against marine Gram-positive bacteria like C.maltaromaticum (MIC=25 uM), C.mobile (MIC=12.5 uM), C.divergens (MIC=25 uM) and C.funditum (MIC=12.5 uM) but also against C.glutamicum (MIC=12.5 uM). Has very little or no activity against Gram-negative bacteria. The polypeptide is Paralithocin 3 (Paralithodes camtschaticus (Red king crab)).